A 62-amino-acid polypeptide reads, in one-letter code: Cytotoxin homolog (62 aa).

Cystine bridges form between C3/C22, C15/C40, C44/C55, and C56/C61.

The protein belongs to the three-finger toxin family. Short-chain subfamily. Orphan group XV sub-subfamily. Expressed by the venom gland.

The protein resides in the secreted. It localises to the target cell membrane. Has low cytotoxic activity. In Naja kaouthia (Monocled cobra), this protein is Cytotoxin homolog.